Here is a 274-residue protein sequence, read N- to C-terminus: Orotidine 5'-phosphate decarboxylase (274 aa).

K95 acts as the Proton donor in catalysis.

The protein belongs to the OMP decarboxylase family. Type 2 subfamily.

It catalyses the reaction orotidine 5'-phosphate + H(+) = UMP + CO2. Its pathway is pyrimidine metabolism; UMP biosynthesis via de novo pathway; UMP from orotate: step 2/2. The sequence is that of Orotidine 5'-phosphate decarboxylase from Mycolicibacterium paratuberculosis (strain ATCC BAA-968 / K-10) (Mycobacterium paratuberculosis).